A 75-amino-acid polypeptide reads, in one-letter code: Large ribosomal subunit protein bL31c (75 aa).

This sequence belongs to the bacterial ribosomal protein bL31 family. Type A subfamily. In terms of assembly, part of the 50S ribosomal subunit.

It localises to the plastid. Its subcellular location is the chloroplast. Its function is as follows. Binds the 23S rRNA. This is Large ribosomal subunit protein bL31c from Cyanidium caldarium (Red alga).